Here is a 2328-residue protein sequence, read N- to C-terminus: MNTTDCFIALVHAIREIKTHFFSRYTGRMEFTLHNGEKKIFYSRPNNHDNCWLNTILQLFRYVDEPFFDWVYNSPENLTLSAIEQLEKLTGLELREGGPPALVIWNIKHLLHTGIGTASRPSEVCMVDGTDMCLADFHAGIFLKGQEHAVFACVTSDGWYAIDDEDFYPWTPDPSDVLVFVPYDQEPLNGGWKANVQRKLKGAGQSSPATGSQNQSGNTGSIINNYYMQQYQNSMDTQLGDNAISGGSNEGSTDTTSTHTTNTQNNDWFSKLASSAFSGLFGALLADKKTEETTLLEDRILTTRNGHTTSTTQSSVGVTYGYATTEDSTSGPNTSGLETRVHQAERFFKMTLFEWVPSQSFGHMHKVVLPSEPKGVYGGLVKSYAYMRNGWDVEVTAVGNQFNGGCLLVALVPEMGDISDREKYQLTLYPHQFINPRTNMTAHITVPYVGVNRYDQYNQHKPWTLVVMVVAPLTVNTSGAQQIKVYANIAPTNVHVAGELPSKEGIFPVACADGYGNMVTTDPKTADPAYGKVYNPPRTALPGRFTNYLDVAEACPTLLTFENVPYVSTRTDGQRLLAKFDVSLAAKHMSNTYLAGLAQYYTQYAGTINLHFMFTGPTDAKARYMVAYVPPGMEAPDNPEEAAHCIHAEWDTGLNSKFTFSIPYISAADYAYTASSEAETTSVQGWVCVYQITHGKADADALVVSASAGKDFELRLPVDARQQTTTTGESADPVTTTVENYGGETQTQRRHHTDVAFVLDRFVKVQVSGNQHTLDVMQVHKDSIVGALLRAATYYFSDLEIAVTHTGKLTWVPNGAPVSALDNTTNPTAYHKGPLTRLALPYTAPHRVLATAYTGTTAYTTGVRRGDLAHLAAAHARHLPTSFNFGAVKAETITELLVRMKRAELYCPRPVLPVQPAGDRHKQPLIAPAKQLLNFDLLKLAGDVESNPGPFFFSDVRSNFSKLVETINQMQEDMSTKHGPDFNRLVSAFEELATGVKAIRTGLDEAKPWYKLIKLLSRLSCMAAVAARSKDPVLVAIMLADTGLEILDSTFVVKKISDSLSSLFHVPAPVFSFGAPILLAGLVKVASSFFRSTPEDLERAEKQLKARDINDIFAILKNGEWLVKLILAIRDWIKAWIASEEKFVTMTDLVPGILEKQRDLNDPSKYKEAKEWLDNARQACLKNGNTHIANLCKVVAPAPSKSRPEPVVVCLRGKSGQGKSFLANVLAQAISTHFTGRTDSVWYCPPDPDHFDGYNQQTVVVMDDLGQNPDGKDFKYFAQMVSTTGFIPPMASLEDKGKPFNSKVIIATTNLYSGFTPRTMVCPDALNRRFHFDIDVSAKDGYKINNKLDIIKALEDTHTNPVAMFQYDCALLNGMAVEMKRMQQDMFKPQPPLQNVYQLVQEVIERVELHEKVSSHPIFKQISIPSQKSVLYFLIEKGQHEAAIEFFEGMVHDSIKEELRPLIQQTSFVKRAFKRLKENFEIVALCLTLLANIVIMIRETRKRQQMVDDAVNEYIEKANITTDDKTLDEAEKNPLETSGASTVGFRERTLPGHKARDDVNSEPAQPVEEQPQAEGPYAGPLERQKPLKVRAKLPQQEGPYAGPMERQKPLKVKAKAPVVKEGPYEGPVKKPVALKVKAKNLIVTESGAPPTDLQKMVMGNTKPVELILDGKTVAICCATGVFGTAYLVPRHLFAEKYDKIMLDGRAMTDSDYRVFEFEIKVKGQDMLSDAALMVLHRGNRVRDITKHFRDTARMKKGTPVVGVINNADVGRLIFSGEALTYKDIVVCMDGDTMPGLFAYRAATKAGYCGGAVLAKDGADTFIVGTHSAGGNGVGYCSCVSRSMLLKMKAHIDPEPHHEGLIVDTRDVEERVHVMRKTKLAPTVAHGVFNPDFGPAALSNRDPRLNEGVVLDEVIFSKHKGDTKMSEEDKALFRRCAADYASRLHSVLGTANAPLSIYEAIKGVDGLDAMEPDTAPGLPWALQGKRRGALIDFENGTVGPEVEAALKLMEKREYKFACQTFLKDEIRPMEKVRAGKTRIVDVLPVEHILYTRMMIGRFCAQMHSNNGPQIGSAVGCNPDVDWQRFGTHFAQYRNVWDVDYSAFDANHCSDAMNIMFEEVFRTEFGFHPNAEWILKTLVNTEHAYENKRITVEGGMPSGCSATSIINTILNNIYVLYALRRHYEGVELDTYTMISYGDDIVVASDYDLDFEALKPHFKSIGQTITPADKSDKGFVLGHSITDVTFLKRHFHMDYGTGFYKPVMASKTLEAILSFARRGTIQEKLISVAGLAVHSGPDEYRRLFEPFQGLFEIPSYRSLYLRWVNAVCGDA.

Residues 1-201 (MNTTDCFIAL…WKANVQRKLK (201 aa)) form the Peptidase C28 domain. At 1-1476 (MNTTDCFIAL…SFVKRAFKRL (1476 aa)) the chain is on the cytoplasmic side. Active-site for leader protease activity residues include Cys-51, His-148, and Asp-163. Disordered stretches follow at residues 199–218 (KLKG…QSGN) and 238–265 (QLGD…NTQN). Gly-202 carries the N-myristoyl glycine; by host lipid modification. Polar residues-rich tracts occupy residues 204–218 (GQSS…QSGN) and 238–251 (QLGD…SNEG). Low complexity predominate over residues 252–265 (STDTTSTHTTNTQN). Residues 787–795 (ALLRAATYY) are antigenic epitope. Residues 865-867 (RGD) carry the Cell attachment site motif. The region spanning 1185-1349 (NTHIANLCKV…DGYKINNKLD (165 aa)) is the SF3 helicase domain. Position 1213 to 1220 (1213 to 1220 (GKSGQGKS)) interacts with ATP. Residues 1477–1497 (KENFEIVALCLTLLANIVIMI) lie within the membrane without spanning it. The Cytoplasmic segment spans residues 1498 to 2328 (RETRKRQQMV…RWVNAVCGDA (831 aa)). 2 stretches are compositionally biased toward basic and acidic residues: residues 1525–1534 (KTLDEAEKNP) and 1545–1559 (FRER…RDDV). The disordered stretch occupies residues 1525–1580 (KTLDEAEKNPLETSGASTVGFRERTLPGHKARDDVNSEPAQPVEEQPQAEGPYAGP). Residues Tyr-1577, Tyr-1600, and Tyr-1624 each carry the O-(5'-phospho-RNA)-tyrosine modification. In terms of domain architecture, Peptidase C3 spans 1648–1844 (APPTDLQKMV…YCSCVSRSML (197 aa)). His-1691 serves as the catalytic For protease 3C activity; Proton donor/acceptor. Residues Asp-1729 and Cys-1808 each act as for protease 3C activity in the active site. The Nuclear localization signal motif lies at 1874-1882 (MRKTKLAPT). Residues 2092 to 2210 (RNVWDVDYSA…ASDYDLDFEA (119 aa)) form the RdRp catalytic domain. The active-site For RdRp activity is Asp-2196.

This sequence belongs to the picornaviruses polyprotein family. In terms of assembly, interacts with host ISG15. Interacts (via R-G-D motif) with host ITGAV/ITGB6. Interacts with host MAVS; this interaction inhibits binding of host TRAF3 to MAVS, thereby suppressing interferon-mediated responses. As to quaternary structure, forms homooligomers. In terms of assembly, homohexamer. Interacts with host VIM. Interacts with host BECN1. Interacts with host DCTN3. As to quaternary structure, interacts with RNA-dependent RNA polymerase; this interaction allows 3B-1 to binds 2 polymerases and act as a primer. It also allows the recruitment of the RNA-dependent RNA polymerase to host membranes. In terms of assembly, interacts with RNA-dependent RNA polymerase; this interaction allows 3B-2 to act as a primer. Interacts with RNA-dependent RNA polymerase; this interaction allows 3B-3 to act as a primer. As to quaternary structure, interacts with 3B-1; this interaction allows 3B-1 to binds 2 polymerases and act as a primer. It also allows the recruitment of the RNA-dependent RNA polymerase to host membranes. Interacts with 3B-2; this interaction allows 3B-2 to act as a primer. Interacts with 3B-3; this interaction allows 3B-3 to act as a primer. Removes six residues from its own C-terminus, generating sLb(pro). In terms of processing, specific enzymatic cleavages in vivo by the viral proteases yield a variety of precursors and mature proteins. The polyprotein seems to be cotranslationally cleaved at the 2A/2B junction by a ribosomal skip from one codon to the next without formation of a peptide bond. This process would release the L-P1-2A peptide from the translational complex. Post-translationally, during virion maturation, immature virions are rendered infectious following cleavage of VP0 into VP4 and VP2. This maturation seems to be an autocatalytic event triggered by the presence of RNA in the capsid and is followed by a conformational change of the particle. Myristoylation is required during RNA encapsidation and formation of the mature virus particle. In terms of processing, uridylylated by the polymerase and covalently linked to the 5'-end of genomic RNA. These uridylylated forms act as a nucleotide-peptide primer for the polymerase.

The protein localises to the host nucleus. It localises to the host cytoplasm. It is found in the virion. The protein resides in the host endoplasmic reticulum membrane. Its subcellular location is the host cytoplasmic vesicle membrane. The catalysed reaction is Autocatalytically cleaves itself from the polyprotein of the foot-and-mouth disease virus by hydrolysis of a Lys-|-Gly bond, but then cleaves host cell initiation factor eIF-4G at bonds -Gly-|-Arg- and -Lys-|-Arg-.. It carries out the reaction a ribonucleoside 5'-triphosphate + H2O = a ribonucleoside 5'-diphosphate + phosphate + H(+). It catalyses the reaction RNA(n) + a ribonucleoside 5'-triphosphate = RNA(n+1) + diphosphate. The enzyme catalyses Selective cleavage of Gln-|-Gly bond in the poliovirus polyprotein. In other picornavirus reactions Glu may be substituted for Gln, and Ser or Thr for Gly.. Its function is as follows. Autocatalytically cleaves itself from the polyprotein at the L/VP0 junction. Also cleaves the host translation initiation factors EIF4G1 and EIF4G3, in order to shut off the capped cellular mRNA transcription. Plays a role in counteracting host innate antiviral response using diverse mechanisms. Possesses a deubiquitinase activity acting on both 'Lys-48' and 'Lys-63'-linked polyubiquitin chains. In turn, inhibits the ubiquitination and subsequent activation of key signaling molecules of type I IFN response such as host RIGI, TBK1, TRAF3 and TRAF6. Inhibits host NF-kappa-B activity by inducing a decrease in RELA mRNA levels. Cleaves a peptide bond in the C-terminus of host ISG15, resulting in the damaging of this modifier that can no longer be attached to target proteins. Also cleaves host G3BP1 and G3BP2 in order to inhibit cytoplasmic stress granules assembly. Functionally, lies on the inner surface of the capsid shell. After binding to the host receptor, the capsid undergoes conformational changes. Capsid protein VP4 is released, capsid protein VP1 N-terminus is externalized, and together, they shape a pore in the host membrane through which the viral genome is translocated into the host cell cytoplasm. After genome has been released, the channel shrinks. Forms an icosahedral capsid of pseudo T=3 symmetry with capsid proteins VP1 and VP3. The capsid is composed of 60 copies of each capsid protein organized in the form of twelve pentamers and encloses the viral positive strand RNA genome. Upon acidifcation in the endosome, dissociates into pentamers. In terms of biological role, forms an icosahedral capsid of pseudo T=3 symmetry with capsid proteins VP0 and VP3. The capsid is composed of 60 copies of each capsid protein organized in the form of twelve pentamers and encloses the viral positive strand RNA genome. Upon acidifcation in the endosome, dissociates into pentamers. Its function is as follows. Forms an icosahedral capsid of pseudo T=3 symmetry with capsid proteins VP2 and VP3. The capsid is composed of 60 copies of each capsid protein organized in the form of twelve pentamers and encloses the viral positive strand RNA genome. Mediates cell entry by attachment to an integrin receptor, usually host ITGAV/ITGB6. In addition, targets host MAVS to suppress type I IFN pathway. Upon acidifcation in the endosome, dissociates into pentamers. Functionally, mediates self-processing of the polyprotein by a translational effect termed 'ribosome skipping'. Mechanistically, 2A-mediated cleavage occurs between the C-terminal glycine and the proline of the downstream protein 2B. In the case of foot-and-mouth disease virus, the 2A oligopeptide is post-translationally 'trimmed' from the C-terminus of the upstream protein 1D by 3C proteinase. Plays an essential role in the virus replication cycle by acting as a viroporin. Creates a pore in the host endoplasmic reticulum and as a consequence releases Ca2+ in the cytoplasm of infected cell. In turn, high levels of cytoplasmic calcium may trigger membrane trafficking and transport of viral ER-associated proteins to viroplasms, sites of viral genome replication. In terms of biological role, associates with and induces structural rearrangements of intracellular membranes. Triggers host autophagy by interacting with host BECN1 and thereby promotes viral replication. Participates in viral replication and interacts with host DHX9. Displays RNA-binding, nucleotide binding and NTPase activities. May play a role in virion morphogenesis and viral RNA encapsidation by interacting with the capsid protein VP3. Its function is as follows. Plays important roles in virus replication, virulence and host range. Cooperates with host DDX56 to inhibit IRF3 nuclear translocation and subsequent type I interferon production. Functionally, covalently linked to the 5'-end of both the positive-strand and negative-strand genomic RNAs. Acts as a genome-linked replication primer. Cysteine protease that generates mature viral proteins from the precursor polyprotein. In addition to its proteolytic activity, binds to viral RNA and thus influences viral genome replication. RNA and substrate bind cooperatively to the protease. In terms of biological role, RNA-directed RNA polymerase 3D-POL replicates genomic and antigenomic RNA by recognizing replications specific signals. Covalently attaches UMP to a tyrosine of VPg, which is used to prime RNA synthesis. The positive stranded RNA genome is first replicated at virus induced membranous vesicles, creating a dsRNA genomic replication form. This dsRNA is then used as template to synthesize positive stranded RNA genomes. ss(+)RNA genomes are either translated, replicated or encapsidated. This Bos taurus (Bovine) protein is Genome polyprotein.